A 452-amino-acid chain; its full sequence is Translation initiation factor eIF2B subunit gamma (452 aa).

An N-acetylmethionine modification is found at M1. Phosphoserine is present on S260.

Belongs to the eIF-2B gamma/epsilon subunits family. In terms of assembly, component of the translation initiation factor 2B (eIF2B) complex which is a heterodecamer of two sets of five different subunits: alpha, beta, gamma, delta and epsilon. Subunits alpha, beta and delta comprise a regulatory subcomplex and subunits epsilon and gamma comprise a catalytic subcomplex. Within the complex, the hexameric regulatory complex resides at the center, with the two heterodimeric catalytic subcomplexes bound on opposite sides.

Its subcellular location is the cytoplasm. It is found in the cytosol. With respect to regulation, activated by the chemical integrated stress response (ISR) inhibitor ISRIB which stimulates guanine nucleotide exchange factor activity for both phosphorylated and unphosphorylated eIF2. Functionally, acts as a component of the translation initiation factor 2B (eIF2B) complex, which catalyzes the exchange of GDP for GTP on the eukaryotic initiation factor 2 (eIF2) complex gamma subunit. Its guanine nucleotide exchange factor activity is repressed when bound to eIF2 complex phosphorylated on the alpha subunit, thereby limiting the amount of methionyl-initiator methionine tRNA available to the ribosome and consequently global translation is repressed. The protein is Translation initiation factor eIF2B subunit gamma (EIF2B3) of Macaca fascicularis (Crab-eating macaque).